Consider the following 191-residue polypeptide: Neuronal calcium sensor 1 (191 aa).

Gly-2 is lipidated: N-myristoyl glycine. EF-hand domains follow at residues 24 to 59 (EAEI…FPFG), 60 to 95 (DPSK…TSRG), 96 to 131 (TVEE…IYRM), and 144 to 179 (TPEK…DPTI). Residues Asp-73, Asn-75, Asp-77, Glu-84, Asp-109, Asp-111, Asp-113, Glu-120, Asp-157, Asn-159, Asp-161, Lys-163, and Glu-168 each contribute to the Ca(2+) site.

This sequence belongs to the recoverin family.

Functionally, neuronal calcium sensor, regulator of G protein-coupled receptor phosphorylation in a calcium dependent manner. Regulates neurite extension and branching by activity-dependent (Ca2+) influx in growth cones. The sequence is that of Neuronal calcium sensor 1 from Aplysia californica (California sea hare).